The primary structure comprises 250 residues: Hydroxyacylglutathione hydrolase (250 aa).

Zn(2+) is bound by residues histidine 52, histidine 54, aspartate 56, histidine 57, histidine 107, aspartate 128, and histidine 166.

The protein belongs to the metallo-beta-lactamase superfamily. Glyoxalase II family. As to quaternary structure, monomer. It depends on Zn(2+) as a cofactor.

The catalysed reaction is an S-(2-hydroxyacyl)glutathione + H2O = a 2-hydroxy carboxylate + glutathione + H(+). The protein operates within secondary metabolite metabolism; methylglyoxal degradation; (R)-lactate from methylglyoxal: step 2/2. In terms of biological role, thiolesterase that catalyzes the hydrolysis of S-D-lactoyl-glutathione to form glutathione and D-lactic acid. This Neisseria meningitidis serogroup A / serotype 4A (strain DSM 15465 / Z2491) protein is Hydroxyacylglutathione hydrolase.